A 104-amino-acid chain; its full sequence is Large ribosomal subunit protein uL24 (104 aa).

It belongs to the universal ribosomal protein uL24 family. Part of the 50S ribosomal subunit.

One of two assembly initiator proteins, it binds directly to the 5'-end of the 23S rRNA, where it nucleates assembly of the 50S subunit. Functionally, one of the proteins that surrounds the polypeptide exit tunnel on the outside of the subunit. This chain is Large ribosomal subunit protein uL24, found in Bradyrhizobium sp. (strain ORS 278).